The sequence spans 370 residues: UDP-N-acetylglucosamine--N-acetylmuramyl-(pentapeptide) pyrophosphoryl-undecaprenol N-acetylglucosamine transferase (370 aa).

UDP-N-acetyl-alpha-D-glucosamine is bound by residues 14–16, asparagine 125, arginine 168, serine 196, and glutamine 297; that span reads TGG.

Belongs to the glycosyltransferase 28 family. MurG subfamily.

The protein resides in the cell inner membrane. The catalysed reaction is di-trans,octa-cis-undecaprenyl diphospho-N-acetyl-alpha-D-muramoyl-L-alanyl-D-glutamyl-meso-2,6-diaminopimeloyl-D-alanyl-D-alanine + UDP-N-acetyl-alpha-D-glucosamine = di-trans,octa-cis-undecaprenyl diphospho-[N-acetyl-alpha-D-glucosaminyl-(1-&gt;4)]-N-acetyl-alpha-D-muramoyl-L-alanyl-D-glutamyl-meso-2,6-diaminopimeloyl-D-alanyl-D-alanine + UDP + H(+). It participates in cell wall biogenesis; peptidoglycan biosynthesis. In terms of biological role, cell wall formation. Catalyzes the transfer of a GlcNAc subunit on undecaprenyl-pyrophosphoryl-MurNAc-pentapeptide (lipid intermediate I) to form undecaprenyl-pyrophosphoryl-MurNAc-(pentapeptide)GlcNAc (lipid intermediate II). This Nitrobacter hamburgensis (strain DSM 10229 / NCIMB 13809 / X14) protein is UDP-N-acetylglucosamine--N-acetylmuramyl-(pentapeptide) pyrophosphoryl-undecaprenol N-acetylglucosamine transferase.